A 254-amino-acid polypeptide reads, in one-letter code: Alcohol dehydrogenase (254 aa).

10–33 (FVAGLGGIGLDTSRELVKRDLKNL) contacts NAD(+). S138 serves as a coordination point for substrate. The active-site Proton acceptor is Y151.

It belongs to the short-chain dehydrogenases/reductases (SDR) family. As to quaternary structure, homodimer.

The enzyme catalyses a primary alcohol + NAD(+) = an aldehyde + NADH + H(+). The catalysed reaction is a secondary alcohol + NAD(+) = a ketone + NADH + H(+). The polypeptide is Alcohol dehydrogenase (Adh) (Drosophila madeirensis (Fruit fly)).